The chain runs to 93 residues: DNA/RNA-binding protein Alba (93 aa).

K11 is modified (N6-acetyllysine).

It belongs to the histone-like Alba family. In terms of processing, acetylated. Acetylation at Lys-11 decreases DNA-binding affinity.

The protein resides in the cytoplasm. Its subcellular location is the chromosome. In terms of biological role, binds double-stranded DNA tightly but without sequence specificity. Involved in DNA compaction. The sequence is that of DNA/RNA-binding protein Alba from Pyrococcus abyssi (strain GE5 / Orsay).